Consider the following 348-residue polypeptide: MENSEQLVWLHGEPQATGSLKSAAEDFVVVEDLGFQPDGDGEQVLVRVRKRGCNTQFVAEMLAKFARLPLRAVSYAGLKDRHAVTEQWFCLHMPGKDTPDFSTLALEGCDVLEVTRHRRKLRIGTLRGNHFTLVLRQVSDRREVDARLVLIAANGVPNYFGSQRFGRNGNNLEQARLWANNEIRVKERNKRSFYLSASRSAMFNQVVSARLAGEQAKTVLCGDALQLTGRGSWFVAKPDELETLQARLDAGELQITAPLPGDGELGTQDDARAFEELALTGQETLWSLVKRERVESARRAVLLYPQQMCWEWQDDTAVEVKFWLPAGSFATSVVRELLQSFQDADIGV.

Phe-27 is a substrate binding site. Asp-80 acts as the Nucleophile in catalysis. Asn-129 lines the substrate pocket. Residues 155 to 303 (GVPNYFGSQR…VESARRAVLL (149 aa)) enclose the TRUD domain. Position 329 (Phe-329) interacts with substrate.

The protein belongs to the pseudouridine synthase TruD family.

The catalysed reaction is uridine(13) in tRNA = pseudouridine(13) in tRNA. Responsible for synthesis of pseudouridine from uracil-13 in transfer RNAs. This is tRNA pseudouridine synthase D from Pectobacterium carotovorum subsp. carotovorum (strain PC1).